The sequence spans 310 residues: Alpha/beta hydrolase domain-containing protein 17A (310 aa).

Residues 38 to 61 (VPEPEPGPGGAGAAPSGPLRTSAA) are disordered. Residues Ser190, Asp255, and His284 each act as charge relay system in the active site. Ser307 bears the Phosphoserine mark.

Belongs to the AB hydrolase superfamily. ABHD17 family. Palmitoylated on cysteine residues located in a cysteine cluster at the N-terminus which promotes membrane localization. Palmitoylation is required for post-synaptic localization and for depalmitoylating activity towards DLG4/PSD95.

It is found in the cell membrane. The protein localises to the endosome membrane. It localises to the cell projection. The protein resides in the dendritic spine. Its subcellular location is the postsynaptic density membrane. The catalysed reaction is S-hexadecanoyl-L-cysteinyl-[protein] + H2O = L-cysteinyl-[protein] + hexadecanoate + H(+). Hydrolyzes fatty acids from S-acylated cysteine residues in proteins. Has depalmitoylating activity towards NRAS. Has depalmitoylating activity towards DLG4/PSD95. May have depalmitoylating activity towars MAP6. In Mus musculus (Mouse), this protein is Alpha/beta hydrolase domain-containing protein 17A.